The following is a 233-amino-acid chain: Choline-phosphate cytidylyltransferase (233 aa).

Residues Leu-6, Ala-8, Gly-9, Tyr-80, Ser-85, and Ala-101 each contribute to the CDP-choline site. Mg(2+) is bound at residue Asp-102. CDP-choline is bound at residue Tyr-187. Residues Glu-213 and Asp-215 each coordinate Mg(2+).

The protein belongs to the LicC/PntC cytidylyltransferase family. Requires Mg(2+) as cofactor.

The catalysed reaction is phosphocholine + CTP + H(+) = CDP-choline + diphosphate. Its pathway is lipopolysaccharide biosynthesis. Cytidylyltransferase involved in the biosynthesis of lipopolysaccharides (LPS), a necessary component and antigenic determinant of the outer membrane that has been shown to be an important factor in the host-parasite interaction in a number of Gram-negative species. Catalyzes the activation of phosphocholine (P-Cho) to CDP-choline (CDP-Cho). LicC is critical for the expression of the 6A2-specific epitope. This Haemophilus influenzae (strain ATCC 51907 / DSM 11121 / KW20 / Rd) protein is Choline-phosphate cytidylyltransferase.